Reading from the N-terminus, the 632-residue chain is Extracellular metalloproteinase 2 (632 aa).

A signal peptide spans 1–19; that stretch reads MHGLLLAGLAAALPLGVAG. A propeptide spanning residues 20-244 is cleaved from the precursor; it reads LPARQQSGLS…VHNVVDYVAS (225 aa). An N-linked (GlcNAc...) asparagine glycan is attached at Asn270. Zn(2+) is bound at residue His429. The active site involves Glu430. His433 contacts Zn(2+).

This sequence belongs to the peptidase M36 family. Requires Zn(2+) as cofactor.

It is found in the secreted. In terms of biological role, secreted metalloproteinase probably acting as a virulence factor. The chain is Extracellular metalloproteinase 2 (MEP2) from Arthroderma benhamiae (Trichophyton mentagrophytes).